Here is a 250-residue protein sequence, read N- to C-terminus: Small ribosomal subunit protein uS2 (250 aa).

This sequence belongs to the universal ribosomal protein uS2 family.

The polypeptide is Small ribosomal subunit protein uS2 (Variovorax paradoxus (strain S110)).